A 300-amino-acid chain; its full sequence is UPF0761 membrane protein PSHAa0171 (300 aa).

6 consecutive transmembrane segments (helical) span residues 47–67, 100–120, 143–163, 181–201, 215–235, and 249–269; these read LLSL…FPGF, NANQ…LLLI, FAVY…SIAV, FSGF…FIML, AIPG…GFAL, and AVAT…VVLL.

It belongs to the UPF0761 family.

Its subcellular location is the cell inner membrane. This is UPF0761 membrane protein PSHAa0171 from Pseudoalteromonas translucida (strain TAC 125).